A 635-amino-acid chain; its full sequence is Threonine--tRNA ligase (635 aa).

Positions 1–61 (MINISFPDGS…EHDCKLRILT (61 aa)) constitute a TGS domain. Positions 242 to 533 (DHRKIGKELD…LIEEYAGKFP (292 aa)) are catalytic. Residues C333, H384, and H510 each contribute to the Zn(2+) site.

Belongs to the class-II aminoacyl-tRNA synthetase family. As to quaternary structure, homodimer. Requires Zn(2+) as cofactor.

Its subcellular location is the cytoplasm. It carries out the reaction tRNA(Thr) + L-threonine + ATP = L-threonyl-tRNA(Thr) + AMP + diphosphate + H(+). Functionally, catalyzes the attachment of threonine to tRNA(Thr) in a two-step reaction: L-threonine is first activated by ATP to form Thr-AMP and then transferred to the acceptor end of tRNA(Thr). Also edits incorrectly charged L-seryl-tRNA(Thr). The protein is Threonine--tRNA ligase of Rickettsia typhi (strain ATCC VR-144 / Wilmington).